A 243-amino-acid chain; its full sequence is Late expression factor 1 (243 aa).

This sequence belongs to the baculoviridae LEF-1 family.

Required for late and very late gene expression. In Orgyia pseudotsugata multicapsid polyhedrosis virus (OpMNPV), this protein is Late expression factor 1 (LEF-1).